Here is a 150-residue protein sequence, read N- to C-terminus: UPF0178 protein Bcep1808_1605 (150 aa).

The protein belongs to the UPF0178 family.

The protein is UPF0178 protein Bcep1808_1605 of Burkholderia vietnamiensis (strain G4 / LMG 22486) (Burkholderia cepacia (strain R1808)).